A 431-amino-acid chain; its full sequence is Adenylosuccinate synthetase (431 aa).

GTP-binding positions include 13-19 (GDEGKGK) and 41-43 (GHT). The active-site Proton acceptor is the Asp14. The Mg(2+) site is built by Asp14 and Gly41. Residues 14–17 (DEGK), 39–42 (NAGH), Thr130, Arg144, Gln225, Thr240, and Arg304 contribute to the IMP site. His42 (proton donor) is an active-site residue. 300 to 306 (ATTGRAR) provides a ligand contact to substrate. GTP-binding positions include Arg306, 332-334 (KLD), and 415-417 (STG).

It belongs to the adenylosuccinate synthetase family. In terms of assembly, homodimer. It depends on Mg(2+) as a cofactor.

It localises to the cytoplasm. The catalysed reaction is IMP + L-aspartate + GTP = N(6)-(1,2-dicarboxyethyl)-AMP + GDP + phosphate + 2 H(+). It functions in the pathway purine metabolism; AMP biosynthesis via de novo pathway; AMP from IMP: step 1/2. Its function is as follows. Plays an important role in the de novo pathway of purine nucleotide biosynthesis. Catalyzes the first committed step in the biosynthesis of AMP from IMP. This is Adenylosuccinate synthetase from Ectopseudomonas mendocina (strain ymp) (Pseudomonas mendocina).